A 125-amino-acid polypeptide reads, in one-letter code: MEHKFVFIALAGALGTLARYSLAGFVQQFNSSFFPFGTLVVNITGCFAAGFLWTLFESRWAVSGEVRTFVLVGFMGAFTTFSAFILETGMLVRSTEWIYGIVNLLLQNSLGFGALMAGIVLGRLI.

The next 4 helical transmembrane spans lie at Phe-5–Phe-25, Phe-33–Trp-53, Phe-69–Gly-89, and Ile-101–Leu-121. The Na(+) site is built by Gly-76 and Thr-79.

It belongs to the fluoride channel Fluc/FEX (TC 1.A.43) family.

The protein localises to the cell inner membrane. It catalyses the reaction fluoride(in) = fluoride(out). With respect to regulation, na(+) is not transported, but it plays an essential structural role and its presence is essential for fluoride channel function. Its function is as follows. Fluoride-specific ion channel. Important for reducing fluoride concentration in the cell, thus reducing its toxicity. The sequence is that of Fluoride-specific ion channel FluC from Desulforapulum autotrophicum (strain ATCC 43914 / DSM 3382 / VKM B-1955 / HRM2) (Desulfobacterium autotrophicum).